Here is a 227-residue protein sequence, read N- to C-terminus: Probable GTP-binding protein EngB (227 aa).

The EngB-type G domain maps to Ile13–Tyr188. GTP is bound by residues Gly21–Ser28, Gly48–Met52, Asp67–Gly70, Thr134–Asp137, and Phe167–Ala169. Positions 28 and 50 each coordinate Mg(2+).

Belongs to the TRAFAC class TrmE-Era-EngA-EngB-Septin-like GTPase superfamily. EngB GTPase family. Mg(2+) is required as a cofactor.

Its function is as follows. Necessary for normal cell division and for the maintenance of normal septation. The chain is Probable GTP-binding protein EngB from Psychrobacter cryohalolentis (strain ATCC BAA-1226 / DSM 17306 / VKM B-2378 / K5).